We begin with the raw amino-acid sequence, 65 residues long: Neurotoxin BmK-M3 (65 aa).

Positions 2-64 (RDAYIAKPEN…VPIRVWGKCH (63 aa)) constitute an LCN-type CS-alpha/beta domain. Cystine bridges form between Cys12-Cys63, Cys16-Cys36, Cys22-Cys46, and Cys26-Cys48.

The protein belongs to the long (4 C-C) scorpion toxin superfamily. Sodium channel inhibitor family. Alpha subfamily. In terms of tissue distribution, expressed by the venom gland.

The protein resides in the secreted. Binds to sodium channels (Nav) and inhibits the inactivation of the activated channels, thereby blocking neuronal transmission. The sequence is that of Neurotoxin BmK-M3 from Olivierus martensii (Manchurian scorpion).